A 128-amino-acid chain; its full sequence is Fluoride-specific ion channel FluC (128 aa).

Transmembrane regions (helical) follow at residues 3–23 (LYAL…RWWF), 33–53 (TLPL…GAAI), 69–89 (FAIT…AETV), and 99–119 (WTFV…ILGI). The Na(+) site is built by G76 and T79.

It belongs to the fluoride channel Fluc/FEX (TC 1.A.43) family.

The protein resides in the cell inner membrane. The enzyme catalyses fluoride(in) = fluoride(out). Its activity is regulated as follows. Na(+) is not transported, but it plays an essential structural role and its presence is essential for fluoride channel function. In terms of biological role, fluoride-specific ion channel. Important for reducing fluoride concentration in the cell, thus reducing its toxicity. In Nitrosospira multiformis (strain ATCC 25196 / NCIMB 11849 / C 71), this protein is Fluoride-specific ion channel FluC.